Here is a 570-residue protein sequence, read N- to C-terminus: Proline--tRNA ligase (570 aa).

Belongs to the class-II aminoacyl-tRNA synthetase family. ProS type 1 subfamily. Homodimer.

It localises to the cytoplasm. The catalysed reaction is tRNA(Pro) + L-proline + ATP = L-prolyl-tRNA(Pro) + AMP + diphosphate. Catalyzes the attachment of proline to tRNA(Pro) in a two-step reaction: proline is first activated by ATP to form Pro-AMP and then transferred to the acceptor end of tRNA(Pro). As ProRS can inadvertently accommodate and process non-cognate amino acids such as alanine and cysteine, to avoid such errors it has two additional distinct editing activities against alanine. One activity is designated as 'pretransfer' editing and involves the tRNA(Pro)-independent hydrolysis of activated Ala-AMP. The other activity is designated 'posttransfer' editing and involves deacylation of mischarged Ala-tRNA(Pro). The misacylated Cys-tRNA(Pro) is not edited by ProRS. This Shewanella pealeana (strain ATCC 700345 / ANG-SQ1) protein is Proline--tRNA ligase.